A 38-amino-acid polypeptide reads, in one-letter code: Large ribosomal subunit protein bL36 (38 aa).

The protein belongs to the bacterial ribosomal protein bL36 family.

The protein is Large ribosomal subunit protein bL36 of Acholeplasma laidlawii (strain PG-8A).